Here is a 294-residue protein sequence, read N- to C-terminus: Bifunctional protein FolD (294 aa).

NADP(+)-binding positions include 166 to 168 (GRS), Ser191, and Ile232.

This sequence belongs to the tetrahydrofolate dehydrogenase/cyclohydrolase family. Homodimer.

It catalyses the reaction (6R)-5,10-methylene-5,6,7,8-tetrahydrofolate + NADP(+) = (6R)-5,10-methenyltetrahydrofolate + NADPH. The catalysed reaction is (6R)-5,10-methenyltetrahydrofolate + H2O = (6R)-10-formyltetrahydrofolate + H(+). The protein operates within one-carbon metabolism; tetrahydrofolate interconversion. Catalyzes the oxidation of 5,10-methylenetetrahydrofolate to 5,10-methenyltetrahydrofolate and then the hydrolysis of 5,10-methenyltetrahydrofolate to 10-formyltetrahydrofolate. The protein is Bifunctional protein FolD of Bradyrhizobium sp. (strain ORS 278).